The chain runs to 850 residues: Mitogen-activated protein kinase kinase kinase 11 (850 aa).

Position 11 is a phosphoserine (Ser-11). The segment at 16–35 (WNGSGSGGGGGTGGVRPEGS) is disordered. Residues 17–31 (NGSGSGGGGGTGGVR) are compositionally biased toward gly residues. The residue at position 35 (Ser-35) is a Phosphoserine. The 65-residue stretch at 42-106 (YANPVWTALF…PSNYVSRGGG (65 aa)) folds into the SH3 domain. In terms of domain architecture, Protein kinase spans 118 to 380 (LRLEEVIGIG…ASILQQLEAL (263 aa)). ATP-binding positions include 124–132 (IGIGGFGKV) and Lys-145. The active-site Proton acceptor is the Asp-242. Thr-278 is modified (phosphothreonine; by autocatalysis). Ser-282 carries the phosphoserine; by autocatalysis and MAP4K1 modification. Ser-395 carries the phosphoserine modification. 2 leucine-zipper regions span residues 404–425 (IQGLFDELRAKEKELLSREEEL) and 439–460 (LRRREHLLAQWELEVFERELTL). Phosphoserine is present on residues Ser-508 and Ser-525. The segment at 535–644 (QLEPTESGQT…SSGTPKLIQR (110 aa)) is disordered. Polar residues predominate over residues 538 to 547 (PTESGQTWGR). Phosphoserine is present on residues Ser-549, Ser-556, and Ser-557. Positions 551-563 (RRLEDSSNGERRA) are enriched in basic and acidic residues. The span at 598–610 (SSPLGSPSTPPAL) shows a compositional bias: low complexity. A Phosphoserine modification is found at Ser-655. The interval 657 to 850 (GLGRDLQPPG…QAPWAPEAGP (194 aa)) is disordered. Residues 677-693 (TAPPPAQMPSPCPPELP) are compositionally biased toward pro residues. Residues 700-711 (LSQTTPDAHSSP) show a composition bias toward polar residues. Position 709 is a phosphoserine (Ser-709). Thr-712 is subject to Phosphothreonine. 9 positions are modified to phosphoserine: Ser-728, Ser-731, Ser-743, Ser-751, Ser-761, Ser-773, Ser-792, Ser-796, and Ser-818. Residues 763-776 (PLGLISRPRPSPLR) are compositionally biased toward low complexity. A compositionally biased stretch (pro residues) spans 790 to 802 (RPSPLPSPQPAPR). Over residues 803–819 (RAPWTLFPDSDPFWDSP) the composition is skewed to low complexity.

This sequence belongs to the protein kinase superfamily. STE Ser/Thr protein kinase family. MAP kinase kinase kinase subfamily. Homodimer; undergoes dimerization during activation. Interacts with MAP2K4/MKK4 and MAP2K7/MKK7. Found in a complex with SH3RF1, RAC1, MAP2K7/MKK7, MAPK8IP1/JIP1 and MAPK8/JNK1. Mg(2+) serves as cofactor. In terms of processing, autophosphorylation on serine and threonine residues within the activation loop plays a role in enzyme activation. Thr-278 is likely to be the main autophosphorylation site. Phosphorylation of Ser-556 and Ser-557 is induced by CDC42.

The protein resides in the cytoplasm. The protein localises to the cytoskeleton. It localises to the microtubule organizing center. It is found in the centrosome. The enzyme catalyses L-seryl-[protein] + ATP = O-phospho-L-seryl-[protein] + ADP + H(+). The catalysed reaction is L-threonyl-[protein] + ATP = O-phospho-L-threonyl-[protein] + ADP + H(+). With respect to regulation, homodimerization via the leucine zipper domains is required for autophosphorylation and subsequent activation. In terms of biological role, activates the JUN N-terminal pathway. Required for serum-stimulated cell proliferation and for mitogen and cytokine activation of MAPK14 (p38), MAPK3 (ERK) and MAPK8 (JNK1) through phosphorylation and activation of MAP2K4/MKK4 and MAP2K7/MKK7. Plays a role in mitogen-stimulated phosphorylation and activation of BRAF, but does not phosphorylate BRAF directly. Influences microtubule organization during the cell cycle. This chain is Mitogen-activated protein kinase kinase kinase 11 (Map3k11), found in Mus musculus (Mouse).